A 298-amino-acid chain; its full sequence is Glycine--tRNA ligase alpha subunit (298 aa).

It belongs to the class-II aminoacyl-tRNA synthetase family. In terms of assembly, tetramer of two alpha and two beta subunits.

It localises to the cytoplasm. It catalyses the reaction tRNA(Gly) + glycine + ATP = glycyl-tRNA(Gly) + AMP + diphosphate. The sequence is that of Glycine--tRNA ligase alpha subunit from Neisseria meningitidis serogroup C / serotype 2a (strain ATCC 700532 / DSM 15464 / FAM18).